Consider the following 290-residue polypeptide: Acetyl-coenzyme A carboxylase carboxyl transferase subunit beta (290 aa).

A CoA carboxyltransferase N-terminal domain is found at 28-290 (IMTKCPKCKK…TGGDIEWLQD (263 aa)). Zn(2+) is bound by residues Cys-32, Cys-35, Cys-51, and Cys-54. A C4-type zinc finger spans residues 32 to 54 (CPKCKKIMLTKELDKNMRVCMNC).

The protein belongs to the AccD/PCCB family. In terms of assembly, acetyl-CoA carboxylase is a heterohexamer composed of biotin carboxyl carrier protein (AccB), biotin carboxylase (AccC) and two subunits each of ACCase subunit alpha (AccA) and ACCase subunit beta (AccD). The cofactor is Zn(2+).

It is found in the cytoplasm. It catalyses the reaction N(6)-carboxybiotinyl-L-lysyl-[protein] + acetyl-CoA = N(6)-biotinyl-L-lysyl-[protein] + malonyl-CoA. Its pathway is lipid metabolism; malonyl-CoA biosynthesis; malonyl-CoA from acetyl-CoA: step 1/1. With respect to regulation, inhibited by pyrrolidine dione antibiotics moiramide B (CPD1) and CPD2. In terms of biological role, component of the acetyl coenzyme A carboxylase (ACC) complex. Biotin carboxylase (BC) catalyzes the carboxylation of biotin on its carrier protein (BCCP) and then the CO(2) group is transferred by the transcarboxylase to acetyl-CoA to form malonyl-CoA. The sequence is that of Acetyl-coenzyme A carboxylase carboxyl transferase subunit beta from Bacillus subtilis (strain 168).